A 93-amino-acid polypeptide reads, in one-letter code: Progonadoliberin-2 (93 aa).

An N-terminal signal peptide occupies residues 1–24; sequence MACQRHLLFLLLVLFAVSTQLSHG. Q25 is subject to Pyrrolidone carboxylic acid. Residue G34 is modified to Glycine amide.

The protein belongs to the GnRH family. Midbrain and hindbrain.

Its subcellular location is the secreted. Its function is as follows. Stimulates the secretion of gonadotropins. This Aquarana catesbeiana (American bullfrog) protein is Progonadoliberin-2 (gnrh2).